Here is a 426-residue protein sequence, read N- to C-terminus: Histidine--tRNA ligase (426 aa).

Belongs to the class-II aminoacyl-tRNA synthetase family. As to quaternary structure, homodimer.

The protein localises to the cytoplasm. The enzyme catalyses tRNA(His) + L-histidine + ATP = L-histidyl-tRNA(His) + AMP + diphosphate + H(+). The protein is Histidine--tRNA ligase of Shewanella baltica (strain OS195).